Reading from the N-terminus, the 345-residue chain is NADH-quinone oxidoreductase subunit 8 (345 aa).

The next 8 helical transmembrane spans lie at 15 to 35 (MLLQGLAVIAFVMGSLIFMVY), 82 to 102 (FVYFLAPFLSMMLALFAFVVI), 115 to 135 (VGILFIFAASSLEVYGVIMGG), 161 to 181 (LGLIIIGIIISTGSMNLTAIV), 190 to 210 (LLNWYWLPHLPMVVLFFVSAL), 240 to 262 (YLLFMAGEYIAMYLMCALLSLLF), 278 to 298 (WWMVIKMWFWFYMFAMVKAIV), and 309 to 329 (IGWKVFLPLSLGWVVLVAILA).

Belongs to the complex I subunit 1 family. As to quaternary structure, NDH-1 is composed of at least 14 different subunits, Nqo1 to Nqo14. The complex has a L-shaped structure, with the hydrophobic arm (subunits Nqo7, Nqo8, Nqo10 to Nqo14) embedded in the inner membrane and the hydrophilic peripheral arm (subunits Nqo1 to Nqo6, Nqo9) protruding into the bacterial cytoplasm. The hydrophilic domain contains all the redox centers.

It is found in the cell inner membrane. The enzyme catalyses a quinone + NADH + 5 H(+)(in) = a quinol + NAD(+) + 4 H(+)(out). Its function is as follows. NDH-1 shuttles electrons from NADH, via FMN and iron-sulfur (Fe-S) centers, to quinones in the respiratory chain. The immediate electron acceptor for the enzyme in this species is believed to be ubiquinone. Couples the redox reaction to proton translocation (for every two electrons transferred, four hydrogen ions are translocated across the cytoplasmic membrane), and thus conserves the redox energy in a proton gradient. The sequence is that of NADH-quinone oxidoreductase subunit 8 from Paracoccus denitrificans.